Consider the following 934-residue polypeptide: Desmocollin 2-like protein (934 aa).

Cadherin domains are found at residues 167 to 274 (RWRP…APEF), 274 to 381 (FTGN…PPTF), 382 to 494 (KEKL…GPEF), and 495 to 600 (NPNI…IPVI). At 167–716 (RWRPLPFSVV…SASVSLGNYG (550 aa)) the chain is on the extracellular side. N-linked (GlcNAc...) asparagine glycans are attached at residues N197, N296, and N316. Residues N509, N565, and N569 are each glycosylated (N-linked (GlcNAc...) asparagine). Residues 717–737 (ILALVLSGLLLLLLCLFLIFF) form a helical membrane-spanning segment. Residues 738 to 934 (CTTKRDKLQI…ICYTTNKTGK (197 aa)) lie on the Cytoplasmic side of the membrane.

As to expression, expressed at low levels in the brain and heart.

The protein resides in the cell junction. Its subcellular location is the desmosome. It is found in the cell membrane. Its function is as follows. A component of desmosome cell-cell junctions which are required for positive regulation of cellular adhesion. Involved in the interaction of plaque proteins and intermediate filaments mediating cell-cell adhesion. Involved in the formation and structural organization of desmosome cell-cell junctions during embryonic development. Required for embryogenesis, specifically for progression of epiboly and normal convergence-extension movements during gastrulation. Required for the development of desmosomal-rich midlines in the heart. Plays an important role in ventricular contraction and resulting heart stroke volume. The chain is Desmocollin 2-like protein from Danio rerio (Zebrafish).